We begin with the raw amino-acid sequence, 596 residues long: Phosphoenolpyruvate carboxykinase [GTP] (596 aa).

Residues arginine 77 and 205 to 207 contribute to the substrate site; that span reads YGG. The Mn(2+) site is built by lysine 214 and histidine 234. Substrate is bound at residue serine 256. 257 to 262 is a GTP binding site; the sequence is ACGKTN. The active site involves cysteine 258. A Mn(2+)-binding site is contributed by aspartate 283. Residues 362 to 388 form a disordered region; that stretch reads KKGSTEKAAHPNSRFTAPAKNNPAISP. 373–375 lines the substrate pocket; it reads NSR. GTP contacts are provided by residues arginine 375, arginine 406, and 499–502; that span reads YGDN.

Belongs to the phosphoenolpyruvate carboxykinase [GTP] family. As to quaternary structure, monomer. Mn(2+) is required as a cofactor.

Its subcellular location is the cytoplasm. It catalyses the reaction oxaloacetate + GTP = phosphoenolpyruvate + GDP + CO2. It functions in the pathway carbohydrate biosynthesis; gluconeogenesis. In terms of biological role, catalyzes the conversion of oxaloacetate (OAA) to phosphoenolpyruvate (PEP), the rate-limiting step in the metabolic pathway that produces glucose from lactate and other precursors derived from the citric acid cycle. The polypeptide is Phosphoenolpyruvate carboxykinase [GTP] (Anaeromyxobacter dehalogenans (strain 2CP-C)).